The following is a 104-amino-acid chain: Nucleoid-associated protein Dtur_0258 (104 aa).

Residues 84 to 104 are disordered; the sequence is EKSAEKMGSLTDGLPLPPGLF.

The protein belongs to the YbaB/EbfC family. Homodimer.

The protein localises to the cytoplasm. The protein resides in the nucleoid. Functionally, binds to DNA and alters its conformation. May be involved in regulation of gene expression, nucleoid organization and DNA protection. The polypeptide is Nucleoid-associated protein Dtur_0258 (Dictyoglomus turgidum (strain DSM 6724 / Z-1310)).